The primary structure comprises 147 residues: UPF0306 protein YPTB0506 (147 aa).

It belongs to the UPF0306 family.

This is UPF0306 protein YPTB0506 from Yersinia pseudotuberculosis serotype I (strain IP32953).